The chain runs to 121 residues: Protein yippee-like 5 (121 aa).

The region spanning arginine 13 to glutamate 110 is the Yippee domain. Zn(2+)-binding residues include cysteine 17, cysteine 20, cysteine 73, and cysteine 76. Phosphoserine is present on serine 118.

The protein belongs to the yippee family. In terms of assembly, identified in the CTLH complex that contains GID4, RANBP9 and/or RANBP10, MKLN1, MAEA, RMND5A (or alternatively its paralog RMND5B), GID8, ARMC8, WDR26 and YPEL5. Within this complex, MAEA, RMND5A (or alternatively its paralog RMND5B), GID8, WDR26, and RANBP9 and/or RANBP10 form the catalytic core, while GID4, MKLN1, ARMC8 and YPEL5 have ancillary roles. Interacts with RANBP9 and RANBP10.

Its subcellular location is the nucleus. The protein localises to the cytoplasm. The protein resides in the cytoskeleton. It localises to the microtubule organizing center. It is found in the centrosome. Its subcellular location is the spindle pole. The protein localises to the midbody. Its function is as follows. Component of the CTLH E3 ubiquitin-protein ligase complex that selectively accepts ubiquitin from UBE2H and mediates ubiquitination and subsequent proteasomal degradation of the transcription factor HBP1. Required for normal cell proliferation. The sequence is that of Protein yippee-like 5 (YPEL5) from Bos taurus (Bovine).